The following is a 152-amino-acid chain: Ribosome maturation factor RimP (152 aa).

Belongs to the RimP family.

The protein localises to the cytoplasm. Its function is as follows. Required for maturation of 30S ribosomal subunits. The sequence is that of Ribosome maturation factor RimP from Ruminiclostridium cellulolyticum (strain ATCC 35319 / DSM 5812 / JCM 6584 / H10) (Clostridium cellulolyticum).